A 393-amino-acid polypeptide reads, in one-letter code: Elongation factor Tu (393 aa).

The region spanning 10-203 (KPHVNIGTIG…AVDDYIPEPV (194 aa)) is the tr-type G domain. The segment at 19–26 (GHVDHGKT) is G1. 19 to 26 (GHVDHGKT) contributes to the GTP binding site. Threonine 26 serves as a coordination point for Mg(2+). The interval 60–64 (GITIS) is G2. A G3 region spans residues 81–84 (DCPG). GTP-binding positions include 81–85 (DCPGH) and 136–139 (NKVD). Positions 136–139 (NKVD) are G4. Residues 173–175 (SAL) form a G5 region.

It belongs to the TRAFAC class translation factor GTPase superfamily. Classic translation factor GTPase family. EF-Tu/EF-1A subfamily. In terms of assembly, monomer.

The protein localises to the cytoplasm. It carries out the reaction GTP + H2O = GDP + phosphate + H(+). In terms of biological role, GTP hydrolase that promotes the GTP-dependent binding of aminoacyl-tRNA to the A-site of ribosomes during protein biosynthesis. This Chlorobaculum parvum (strain DSM 263 / NCIMB 8327) (Chlorobium vibrioforme subsp. thiosulfatophilum) protein is Elongation factor Tu.